Consider the following 399-residue polypeptide: Acetate kinase (399 aa).

Asn7 contacts Mg(2+). ATP is bound at residue Lys14. Arg91 contacts substrate. Asp148 functions as the Proton donor/acceptor in the catalytic mechanism. Residues 208-212 and 283-285 contribute to the ATP site; these read HLGNG and DFR. Glu384 provides a ligand contact to Mg(2+).

Belongs to the acetokinase family. In terms of assembly, homodimer. Mg(2+) is required as a cofactor. Requires Mn(2+) as cofactor.

It localises to the cytoplasm. It catalyses the reaction acetate + ATP = acetyl phosphate + ADP. The protein operates within metabolic intermediate biosynthesis; acetyl-CoA biosynthesis; acetyl-CoA from acetate: step 1/2. In terms of biological role, catalyzes the formation of acetyl phosphate from acetate and ATP. Can also catalyze the reverse reaction. The chain is Acetate kinase from Dictyoglomus thermophilum (strain ATCC 35947 / DSM 3960 / H-6-12).